The chain runs to 254 residues: Alcohol dehydrogenase (254 aa).

10–33 (FVAGLGGIGLDTSREIVKSGPKNL) lines the NAD(+) pocket. A substrate-binding site is contributed by Ser138. Tyr151 (proton acceptor) is an active-site residue.

This sequence belongs to the short-chain dehydrogenases/reductases (SDR) family. As to quaternary structure, homodimer.

The enzyme catalyses a primary alcohol + NAD(+) = an aldehyde + NADH + H(+). The catalysed reaction is a secondary alcohol + NAD(+) = a ketone + NADH + H(+). The chain is Alcohol dehydrogenase (Adh) from Drosophila affinidisjuncta (Fruit fly).